Consider the following 409-residue polypeptide: MASGKATGKTDAPAPVIKLGGPRPPKVGSSGNASWFQAIKAKKLNSPQPKFEGSGVPDNENLKTSQQHGYWRRQARFKPGKGGRKPVPDAWYFYYTGTGPAADLNWGDSQDGIVWVAAKGADVKSRSNQGTRDPDKFDQYPLRFSDGGPDGNFRWDFIPLNRGRSGRSTAASSAASSRPPSREGSRGRRSGSEDDLIARAAKIIQDQQKKGSRITKAKADEMAHRRYCKRTIPPGYKVDQVFGPRTKGKEGNFGDDKMNEEGIKDGRVTAMLNLVPSSHACLFGSRVTPKLQPDGLHLKFEFTTVVPRDDPQFDNYVKICDQCVDGVGTRPKDDEPKPKSRSSSRPATRTSSPAPRQQRLKKEKRPKKQDDEVDKALTSDEERNNAQLEFDDEPKVINWGDSALGENEL.

4 disordered regions span residues 1-32, 44-69, 121-194, and 238-259; these read MASGKATGKTDAPAPVIKLGGPRPPKVGSSGN, LNSPQPKFEGSGVPDNENLKTSQQHG, ADVK…GSED, and VDQVFGPRTKGKEGNFGDDKMN. An RNA-binding region spans residues 29-160; sequence SSGNASWFQA…GNFRWDFIPL (132 aa). In terms of domain architecture, CoV N NTD spans 31 to 156; it reads GNASWFQAIK…GGPDGNFRWD (126 aa). The span at 162-179 shows a compositional bias: low complexity; that stretch reads RGRSGRSTAASSAASSRP. Basic and acidic residues-rich tracts occupy residues 180–192 and 247–259; these read PSREGSRGRRSGS and KGKEGNFGDDKMN. A phosphoserine; by host mark is found at S190 and S192. Residues 215–331 enclose the CoV N CTD domain; sequence TKAKADEMAH…QCVDGVGTRP (117 aa). Residues 226–333 are dimerization; the sequence is RYCKRTIPPG…VDGVGTRPKD (108 aa). C320 and C323 are joined by a disulfide. Residues 326 to 409 form a disordered region; it reads GVGTRPKDDE…GDSALGENEL (84 aa). Positions 341-356 are enriched in low complexity; sequence RSSSRPATRTSSPAPR. A compositionally biased stretch (basic residues) spans 358-367; sequence QRLKKEKRPK. Basic and acidic residues predominate over residues 368 to 384; sequence KQDDEVDKALTSDEERN. At T378 the chain carries Phosphothreonine; by host. Phosphoserine; by host is present on S379.

This sequence belongs to the gammacoronavirus nucleocapsid protein family. Homooligomer. Both monomeric and oligomeric forms interact with RNA. Interacts with protein M. Interacts with NSP3; this interaction serves to tether the genome to the newly translated replicase-transcriptase complex at a very early stage of infection. In terms of processing, ADP-ribosylated. The ADP-ribosylation is retained in the virion during infection. Post-translationally, phosphorylated on serine and threonine residues.

The protein resides in the virion. It localises to the host endoplasmic reticulum-Golgi intermediate compartment. Its subcellular location is the host Golgi apparatus. Its function is as follows. Packages the positive strand viral genome RNA into a helical ribonucleocapsid (RNP) and plays a fundamental role during virion assembly through its interactions with the viral genome and membrane protein M. Plays an important role in enhancing the efficiency of subgenomic viral RNA transcription as well as viral replication. This Gallus gallus (Chicken) protein is Nucleoprotein.